The sequence spans 609 residues: Glutamine--fructose-6-phosphate aminotransferase [isomerizing] (609 aa).

The active-site Nucleophile; for GATase activity is the Cys-2. A Glutamine amidotransferase type-2 domain is found at 2-217 (CGIVGAIAGR…EGDTAELRRD (216 aa)). SIS domains are found at residues 284–425 (TADA…LQGR) and 458–599 (WAER…VDKP). The active-site For Fru-6P isomerization activity is Lys-604.

In terms of assembly, homodimer.

The protein localises to the cytoplasm. It carries out the reaction D-fructose 6-phosphate + L-glutamine = D-glucosamine 6-phosphate + L-glutamate. Catalyzes the first step in hexosamine metabolism, converting fructose-6P into glucosamine-6P using glutamine as a nitrogen source. The chain is Glutamine--fructose-6-phosphate aminotransferase [isomerizing] from Xanthomonas campestris pv. campestris (strain ATCC 33913 / DSM 3586 / NCPPB 528 / LMG 568 / P 25).